We begin with the raw amino-acid sequence, 739 residues long: Nucleoprotein (739 aa).

A coiled-coil region spans residues 334-363 (VNVGEQYQQLREAATEAEKQLQQYAESREL). Disordered regions lie at residues 414–475 (RPNL…YHDD) and 498–642 (FELQ…IGQS). Acidic residues predominate over residues 570–579 (TPIDQGDDDP). Residues 614–624 (AEAHEPPHKSS) show a composition bias toward basic and acidic residues. Residues 625–634 (NEPAETSQLN) are compositionally biased toward polar residues.

The protein belongs to the filoviruses nucleoprotein family. Homooligomer. Homomultimerizes to form the nucleocapsid. Binds to viral genomic RNA. Interacts with VP35 and VP30 to form the nucleocapsid. Interacts with host PPP2R5C; this interaction leads to VP30 dephosphorylation and viral transcription. Interacts with VP24; this interaction facilitates nucleocapsid assembly and genome packaging. Interacts with matrix protein VP40; this interaction allows recruitment of the nucleocapsid into progeny virions. Interacts with host STAU1. Interacts with host NXF1 (via RNA-binding domain); this interaction recruits NXF1 to the inclusion bodies were viral replication takes place, probably to export viral mRNA-NXF1 complexes from these sites. Interacts with host CCDC92; this interaction sequesters NP in the host cytoplasm. Interacts with host TRIM14. Phosphorylated and O-glycosylated by host. Acetylated by host EP300 in vitro.

Its subcellular location is the virion. It localises to the host cytoplasm. Functionally, oligomerizes into helical capsid to encapsidate the viral genome, protecting it from nucleases and the cellular innate immune response. VP35 binds to and stabilizes monomeric NP, keeping it soluble. Upon virus replication, NP is recruited to bind cooperatively viral genomic RNA and VP35 is released. The encapsidated genomic RNA is termed the nucleocapsid and serves as template for transcription and replication. The nucleocapsid is helical with a pitch of 10.81 NP per turn and a diameter of about 22nm. Each NP binds to six nucleotides of viral genomic RNA, three being exposed to the solvant and three hidden into the nucleocapsid. Also recruits host PPP2R5C phosphatase to dephosphorylate VP30 and thereby promote viral transcription. Upon virion assembly and budding, NP binds to VP24 and possibly host STAU1. The polypeptide is Nucleoprotein (NP) (Homo sapiens (Human)).